Here is a 330-residue protein sequence, read N- to C-terminus: Pre-mRNA-splicing factor 38 (330 aa).

A disordered region spans residues 182–330 (SVLDEDLDDE…SRGERDRRRY (149 aa)). Residues 184-199 (LDEDLDDELPSDEEKA) show a composition bias toward acidic residues. The span at 213–224 (RRPRRVRSKSRS) shows a compositional bias: basic residues. Over residues 240–330 (RSRDYYDELE…SRGERDRRRY (91 aa)) the composition is skewed to basic and acidic residues.

The protein belongs to the PRP38 family. As to quaternary structure, component of the spliceosome C complex. Interacts with Mfap1 (via C-terminus). In terms of tissue distribution, detected in all germal and follicle cells.

Its subcellular location is the nucleus. In terms of biological role, required for pre-mRNA splicing. This chain is Pre-mRNA-splicing factor 38, found in Drosophila melanogaster (Fruit fly).